The chain runs to 532 residues: Protein DETOXIFICATION 51 (532 aa).

12 consecutive transmembrane segments (helical) span residues Phe65–Leu85, Leu98–Met118, Val142–Ile162, Ala176–Ile196, Pro208–Val228, Val238–Trp258, Val290–Val310, Val316–Leu336, Leu358–Ala378, Ile395–Pro415, Ala439–Phe459, and Gly461–Val481.

The protein belongs to the multi antimicrobial extrusion (MATE) (TC 2.A.66.1) family. Expressed in the meristematic regions. Mainly detected in tissues where cells were actively dividing, such as leaf primordia and young leaves, the junction between lateral root and the primary root, root cap, hydathodes, the junction between secondary inflorescence and the main inflorescence, young stamen and young siliques. Highly expressed at the junction between the hypocotyl and the root, and at the marginal areas of cotyledons and true leaves, coinciding with the locations of the hydathode. Also highly expressed at the basal regions of the newly emerged lateral roots. In the floral organs, mostly expressed at the style of the pistil.

It localises to the endosome membrane. The protein resides in the late endosome membrane. Functionally, functions as a multidrug and toxin extrusion transporter that negatively regulates plant disease resistance. Plays an important role in maintaining normal plant architecture, possibly by regulating local auxin biosynthesis. May act as a negative regulator of hypocotyl cell elongation in the light. The polypeptide is Protein DETOXIFICATION 51 (Arabidopsis thaliana (Mouse-ear cress)).